A 551-amino-acid polypeptide reads, in one-letter code: Solute carrier family 22 member 13 (551 aa).

Residues 1–20 (MAQFVQVLAEIGDFGRFQIQ) lie on the Cytoplasmic side of the membrane. A helical membrane pass occupies residues 21-41 (LLILLCVLNFLSPFYFFAHVF). Residues 42–138 (MVLDEPHHCA…LVCDRKHLKD (97 aa)) are Extracellular-facing. N-linked (GlcNAc...) asparagine glycans are attached at residues asparagine 57, asparagine 61, asparagine 92, and asparagine 104. Residues 139-159 (TTQSVFMAGLLVGTLMFGPLC) form a helical membrane-spanning segment. Topologically, residues 160–167 (DRIGRKAT) are cytoplasmic. Residues 168-188 (ILAQLLLFTLIGLATAFVPSF) form a helical membrane-spanning segment. Residues 189 to 195 (ELYMALR) lie on the Extracellular side of the membrane. A helical membrane pass occupies residues 196–216 (FAVATAVAGLSFSNVTLLTEW). Residues 217–224 (VGPSWRTQ) are Cytoplasmic-facing. The chain crosses the membrane as a helical span at residues 225 to 245 (AVVLAQCNFSLGQMVLAGLAY). At 246-251 (GFRNWR) the chain is on the extracellular side. The chain crosses the membrane as a helical span at residues 252 to 272 (LLQITGTAPGLLLFFYFWALP). The Cytoplasmic portion of the chain corresponds to 273-332 (ESARWLLTRGRMDEAIQLIQKAASVNRRKLSPELMNQLVPEKTGPSGNALDLFRHPQLRK). A helical transmembrane segment spans residues 333-353 (VTLIIFCVWFVDSLGYYGLSL). Glutamine 354 is a topological domain (extracellular). The helical transmembrane segment at 355-375 (VGDFGLDVYLTQLIFGAVEVP) threads the bilayer. The Cytoplasmic portion of the chain corresponds to 376-397 (ARCSSIFMMQRFGRKWSQLGTL). A helical transmembrane segment spans residues 398–418 (VLGGLMCIIIIFIPADLPVVV). Residues 419–427 (TMLAVVGKM) are Extracellular-facing. The helical transmembrane segment at 428 to 448 (ATAAAFTISYVYSAELFPTIL) threads the bilayer. Residues 449–452 (RQTG) are Cytoplasmic-facing. The helical transmembrane segment at 453–473 (MGLVGIFSRIGGILTPLVILL) threads the bilayer. The Extracellular portion of the chain corresponds to 474–478 (GEYHA). A helical transmembrane segment spans residues 479–499 (ALPMLIYGSLPIVAGLLCTLL). Residues 500 to 551 (PETHGQGLKDTLQDLELGPHPRSPKSVPSEKETEAKGRTSSPGVAFVSSTYF) are Cytoplasmic-facing. Residues 511–551 (LQDLELGPHPRSPKSVPSEKETEAKGRTSSPGVAFVSSTYF) are disordered. The span at 527-536 (PSEKETEAKG) shows a compositional bias: basic and acidic residues. Residues 537 to 551 (RTSSPGVAFVSSTYF) show a composition bias toward polar residues.

The protein belongs to the major facilitator (TC 2.A.1) superfamily. Organic cation transporter (TC 2.A.1.19) family. In terms of processing, glycosylated. In terms of tissue distribution, ubiquitous. Highly expressed in kidneys and to a weaker extent in brain, heart, and intestine. In kidneys, expressed in proximal convoluted tubule. In kidneys, also expressed in cortical collecting duct, whereas glomerulus and thick ascending limb exhibit no expression.

Its subcellular location is the apical cell membrane. The catalysed reaction is urate(out) + (S)-lactate(in) = urate(in) + (S)-lactate(out). It carries out the reaction urate(out) + succinate(in) = urate(in) + succinate(out). It catalyses the reaction urate(out) + glutathione(in) = urate(in) + glutathione(out). The enzyme catalyses nicotinate(in) + urate(out) = nicotinate(out) + urate(in). The catalysed reaction is orotate(out) + a carboxylate(in) = orotate(in) + a carboxylate(out). In terms of biological role, anion antiporter that mediates the transport of urate, orotate and nicotinate in exchange for organic or inorganic anions. Translocates urate and orotate across the apical membrane of proximal tubule epithelial cells and involved in urate renal reabsorption. Possibly involved in orotate renal reabsorption and nicotinate intestinal reabsorption. Mediates urate uptake by an exchange with organic anions such as (S)-lactate, succinate, glutathione and nicotinate. Urate and orotate transports are Cl(-)-dependent. Shows similar transport characteristics as the urate/orotate renal antiporter SLC22A12/URAT1 and may act as a compensator of SLC22A12/URAT1 in certain conditions. The sequence is that of Solute carrier family 22 member 13 from Homo sapiens (Human).